We begin with the raw amino-acid sequence, 640 residues long: DNA gyrase subunit B (640 aa).

A Toprim domain is found at 423-537; sequence AELYIVEGDS…NGNIYIAQPP (115 aa). Positions 429, 502, and 504 each coordinate Mg(2+).

It belongs to the type II topoisomerase GyrB family. Heterotetramer, composed of two GyrA and two GyrB chains. In the heterotetramer, GyrA contains the active site tyrosine that forms a transient covalent intermediate with DNA, while GyrB binds cofactors and catalyzes ATP hydrolysis. The cofactor is Mg(2+). Mn(2+) serves as cofactor. Ca(2+) is required as a cofactor.

It is found in the cytoplasm. It carries out the reaction ATP-dependent breakage, passage and rejoining of double-stranded DNA.. Functionally, a type II topoisomerase that negatively supercoils closed circular double-stranded (ds) DNA in an ATP-dependent manner to modulate DNA topology and maintain chromosomes in an underwound state. Negative supercoiling favors strand separation, and DNA replication, transcription, recombination and repair, all of which involve strand separation. Also able to catalyze the interconversion of other topological isomers of dsDNA rings, including catenanes and knotted rings. Type II topoisomerases break and join 2 DNA strands simultaneously in an ATP-dependent manner. The sequence is that of DNA gyrase subunit B from Spiroplasma citri.